A 372-amino-acid polypeptide reads, in one-letter code: 3-galactosyl-N-acetylglucosaminide 4-alpha-L-fucosyltransferase FUT3 (372 aa).

Topologically, residues 1–15 are cytoplasmic; sequence MDPLGAAKPQWPWRR. Residues 16–34 form a helical; Signal-anchor for type II membrane protein membrane-spanning segment; that stretch reads CLAALLFQLLVAVCFFSYL. Topologically, residues 35–372 are lumenal; sequence RVSRDDATGS…TMRSIAAWFT (338 aa). A disordered region spans residues 40-69; it reads DATGSPRPGLMAVEPVTGAPSGSSRQDTTP. N-linked (GlcNAc...) asparagine glycosylation is found at Asn165 and Asn196.

The protein belongs to the glycosyltransferase 10 family. In terms of processing, glycosylated.

It localises to the golgi apparatus. The protein localises to the golgi stack membrane. It carries out the reaction a beta-D-galactosyl-(1-&gt;3)-N-acetyl-beta-D-glucosaminyl derivative + GDP-beta-L-fucose = a beta-D-galactosyl-(1-&gt;3)-[alpha-L-fucosyl-(1-&gt;4)]-N-acetyl-beta-D-glucosaminyl derivative + GDP + H(+). It catalyses the reaction an N-acetyl-alpha-neuraminyl-(2-&gt;3)-beta-D-galactosyl-(1-&gt;4)-N-acetyl-beta-D-glucosaminyl derivative + GDP-beta-L-fucose = an alpha-Neu5Ac-(2-&gt;3)-beta-D-Gal-(1-&gt;4)-[alpha-L-Fuc-(1-&gt;3)]-beta-D-GlcNAc derivative + GDP + H(+). The enzyme catalyses a beta-D-galactosyl-(1-&gt;4)-N-acetyl-beta-D-glucosaminyl derivative + GDP-beta-L-fucose = a beta-D-galactosyl-(1-&gt;4)-[alpha-L-fucosyl-(1-&gt;3)]-N-acetyl-beta-D-glucosaminyl derivative + GDP + H(+). The catalysed reaction is an alpha-Neu5Ac-(2-&gt;3)-beta-D-Gal-(1-&gt;4)-beta-D-GlcNAc-(1-&gt;3)-beta-D-Gal-(1-&gt;4)-[alpha-L-Fuc-(1-&gt;3)]-beta-D-GlcNAc derivative + GDP-beta-L-fucose = an alpha-Neu5Ac-(2-&gt;3)-beta-D-Gal-(1-&gt;4)-[alpha-L-Fuc-(1-&gt;3)]-beta-D-GlcNAc-(1-&gt;3)-beta-D-Gal-(1-&gt;4)-[alpha-L-Fuc-(1-&gt;3)]-beta-D-GlcNAc derivative + GDP + H(+). It carries out the reaction Lc4Cer + GDP-beta-L-fucose = a lactoside III(4)-a-Fuc-Lc4Cer + GDP + H(+). It catalyses the reaction a beta-D-Gal-(1-&gt;3)-beta-D-GlcNAc-(1-&gt;3)-beta-D-Gal-(1-&gt;4)-beta-D-Glc-(1&lt;-&gt;1')-Cer(d18:1(4E)) + GDP-beta-L-fucose = a III(4)-a-Fuc-Lc4Cer(d18:1(4E)) + GDP + H(+). The enzyme catalyses N-acetyl-alpha-neuraminosyl-(2-&gt;3)-beta-D-galactosyl-(1-&gt;3)-[N-acetyl-alpha-neuraminosyl-(2-&gt;6)]-N-acetyl-beta-D-glucosaminyl-(1-&gt;3)-beta-D-galactosyl-(1-&gt;4)-beta-D-glucosyl-(1&lt;-&gt;1')-N-acyl-sphing-4-enine + GDP-beta-L-fucose = N-acetyl-alpha-neuraminosyl-(2-&gt;3)-beta-D-galactosyl-(1-&gt;3)-alpha-L-fucosyl-(1-&gt;4)-[N-acetyl-alpha-neuraminosyl-(2-&gt;6)-N-acetyl-beta-D-glucosaminyl-(1-&gt;3)]-beta-D-galactosyl-(1-&gt;4)-beta-D-glucosyl-(1&lt;-&gt;1')-N-acyl-sphing-4-enine + GDP + H(+). The catalysed reaction is N-acetyl-alpha-neuraminosyl-(2-&gt;3)-beta-D-galactosyl-(1-&gt;3)-N-acetyl-beta-D-glucosaminyl-(1-&gt;3)-beta-D-galactosyl-(1-&gt;4)-beta-D-glucosyl-(1&lt;-&gt;1')-N-acyl-sphing-4-enine + GDP-beta-L-fucose = N-acetyl-alpha-neuraminosyl-(2-&gt;3)-beta-D-galactosyl-(1-&gt;3)-alpha-L-fucosyl-(1-&gt;4)-[N-acetyl-beta-D-glucosaminyl-(1-&gt;3)]-beta-D-galactosyl-(1-&gt;4)-beta-D-glucosyl-(1&lt;-&gt;1')-N-acyl-sphing-4-enine + GDP + H(+). It carries out the reaction beta-D-galactosyl-(1-&gt;3)-N-acetyl-D-glucosamine + GDP-beta-L-fucose = beta-D-galactosyl-(1-&gt;3)-[alpha-L-fucosyl-(1-&gt;4)]-N-acetyl-D-glucosamine + GDP + H(+). It catalyses the reaction alpha-L-Fuc-(1-&gt;2)-beta-D-Gal-(1-&gt;3)-D-GlcNAc + GDP-beta-L-fucose = alpha-L-Fuc-(1-&gt;2)-beta-D-Gal-(1-&gt;3)-[alpha-L-Fuc-(1-&gt;4)]-D-GlcNAc + GDP + H(+). The enzyme catalyses alpha-L-Fuc-(1-&gt;2)-beta-D-Gal-(1-&gt;4)-D-GlcNAc + GDP-beta-L-fucose = alpha-L-Fuc-(1-&gt;2)-beta-D-Gal-(1-&gt;4)-[alpha-L-Fuc-(1-&gt;3)]-D-GlcNAc + GDP + H(+). The catalysed reaction is beta-D-galactosyl-(1-&gt;4)-N-acetyl-D-glucosamine + GDP-beta-L-fucose = beta-D-galactosyl-(1-&gt;4)-[alpha-L-fucosyl-(1-&gt;3)]-N-acetyl-D-glucosamine + GDP + H(+). It carries out the reaction lactose + GDP-beta-L-fucose = beta-D-galactosyl-(1-&gt;4)-[alpha-L-fucosyl-(1-&gt;3)]-D-glucose + GDP + H(+). It catalyses the reaction an alpha-Neu5Ac-(2-&gt;3)-beta-D-Gal-(1-&gt;3)-D-GlcNAc derivative + GDP-beta-L-fucose = an alpha-Neu5Ac-(2-&gt;3)-beta-D-Gal-(1-&gt;3)-[alpha-L-Fuc-(1-&gt;4)]-beta-D-GlcNAc derivative + GDP + H(+). It functions in the pathway protein modification; protein glycosylation. Functionally, catalyzes the transfer of L-fucose, from a guanosine diphosphate-beta-L-fucose, to both the subterminal N-acetyl glucosamine (GlcNAc) of type 1 chain (beta-D-Gal-(1-&gt;3)-beta-D-GlcNAc) glycolipids and oligosaccharides via an alpha(1,4) linkage, and the subterminal glucose (Glc) or GlcNAc of type 2 chain (beta-D-Gal-(1-&gt;4)-beta-D-GlcNAc) oligosaccharides via an alpha(1,3) linkage, independently of the presence of terminal alpha-L-fucosyl-(1,2) moieties on the terminal galactose of these acceptors and participates in the blood groups Lewis determination and expression of Lewis a (Le(a)), lewis b (Le(b)), Lewis x/SSEA-1 (Le(x)) and lewis y (Le(y)) antigens. Also catalyzes the transfer of L-fucose to subterminal GlcNAc of sialyl- and disialyl-lactotetraosylceramide to produce sialyl Lewis a (sLe(a)) and disialyl Lewis a via an alpha(1,4) linkage and therefore may regulate cell surface sialyl Lewis a expression and consequently regulates adhesive properties to E-selectin, cell proliferation and migration. Catalyzes the transfer of an L-fucose to 3'-sialyl-N-acetyllactosamine by an alpha(1,3) linkage, which allows the formation of sialyl-Lewis x structure and therefore may regulate the sialyl-Lewis x surface antigen expression and consequently adhesive properties to E-selectin. Prefers type 1 chain over type 2 acceptors. Type 1 tetrasaccharide is a better acceptor than type 1 disaccharide suggesting that a beta anomeric configuration of GlcNAc in the substrate is preferred. Lewis-positive (Le(+)) individuals have an active enzyme while Lewis-negative (Le(-)) individuals have an inactive enzyme. The sequence is that of 3-galactosyl-N-acetylglucosaminide 4-alpha-L-fucosyltransferase FUT3 from Pan troglodytes (Chimpanzee).